Here is a 137-residue protein sequence, read N- to C-terminus: Large ribosomal subunit protein uL16c (137 aa).

This sequence belongs to the universal ribosomal protein uL16 family. In terms of assembly, part of the 50S ribosomal subunit.

The protein resides in the plastid. This Aneura mirabilis (Parasitic liverwort) protein is Large ribosomal subunit protein uL16c.